A 326-amino-acid polypeptide reads, in one-letter code: MSIIIRVEDLRAVYLVREGTIKAADGISLDILENSVTAIVGESASGKSTIIEAMTKTLPPNGRILSGRVLYKGKDLLTMREEELRKIRWKEIALVPQAAQQSLNPTMKVIEHFKDTVEAHGVRWSHSELIEKASEKLRMVRLNPEAVLNSYPLQLSGGMKQRVLIALALLLDPVVLILDEPTSALDVLTQAHIIQLLKELKKMLKITLIFVTHDIAVAAELADKVAVIYGGNLVEYNSTFQIFKNPLHPYTRGLINSIMAVNADMSKVKPIPGDPPSLLNPPSGCRFHPRCEYAMEICKKEKPKWIRLDGEAHVACHLYEEGRPLK.

The 251-residue stretch at 5 to 255 folds into the ABC transporter domain; the sequence is IRVEDLRAVY…PLHPYTRGLI (251 aa). Residues 44-49, asparagine 61, and glutamine 97 each bind ATP; that span reads ASGKST. The [4Fe-4S] cluster site is built by cysteine 285, cysteine 291, cysteine 298, and cysteine 316.

Belongs to the ABC transporter superfamily.

Its subcellular location is the cell membrane. It catalyses the reaction a dipeptide(out) + ATP + H2O = a dipeptide(in) + ADP + phosphate + H(+). The C-terminal iron-sulfur cluster may stabilize the structure of the C-terminal loops and may function in the regulation of the transport process. In terms of biological role, part of the ABC transporter Dpp involved in dipeptide transport. Responsible for energy coupling to the transport system. This chain is Dipeptide transport ATP-binding protein DppD, found in Caldanaerobacter subterraneus subsp. tengcongensis (strain DSM 15242 / JCM 11007 / NBRC 100824 / MB4) (Thermoanaerobacter tengcongensis).